The sequence spans 557 residues: Dihydroxy-acid dehydratase (557 aa).

Residue Cys50 participates in [2Fe-2S] cluster binding. Asp82 contributes to the Mg(2+) binding site. Cys123 is a [2Fe-2S] cluster binding site. Asp124 and Lys125 together coordinate Mg(2+). Lys125 is subject to N6-carboxylysine. A [2Fe-2S] cluster-binding site is contributed by Cys195. Glu447 contributes to the Mg(2+) binding site. The active-site Proton acceptor is the Ser473.

Belongs to the IlvD/Edd family. Homodimer. Requires [2Fe-2S] cluster as cofactor. Mg(2+) is required as a cofactor.

It catalyses the reaction (2R)-2,3-dihydroxy-3-methylbutanoate = 3-methyl-2-oxobutanoate + H2O. The catalysed reaction is (2R,3R)-2,3-dihydroxy-3-methylpentanoate = (S)-3-methyl-2-oxopentanoate + H2O. It functions in the pathway amino-acid biosynthesis; L-isoleucine biosynthesis; L-isoleucine from 2-oxobutanoate: step 3/4. The protein operates within amino-acid biosynthesis; L-valine biosynthesis; L-valine from pyruvate: step 3/4. In terms of biological role, functions in the biosynthesis of branched-chain amino acids. Catalyzes the dehydration of (2R,3R)-2,3-dihydroxy-3-methylpentanoate (2,3-dihydroxy-3-methylvalerate) into 2-oxo-3-methylpentanoate (2-oxo-3-methylvalerate) and of (2R)-2,3-dihydroxy-3-methylbutanoate (2,3-dihydroxyisovalerate) into 2-oxo-3-methylbutanoate (2-oxoisovalerate), the penultimate precursor to L-isoleucine and L-valine, respectively. The polypeptide is Dihydroxy-acid dehydratase (Metallosphaera sedula (strain ATCC 51363 / DSM 5348 / JCM 9185 / NBRC 15509 / TH2)).